The following is a 500-amino-acid chain: Probable cytosol aminopeptidase 1 (500 aa).

The Mn(2+) site is built by lysine 263 and aspartate 268. Lysine 275 is an active-site residue. Mn(2+) contacts are provided by aspartate 287, aspartate 346, and glutamate 348. Arginine 350 is an active-site residue.

Belongs to the peptidase M17 family. Requires Mn(2+) as cofactor.

It is found in the cytoplasm. The catalysed reaction is Release of an N-terminal amino acid, Xaa-|-Yaa-, in which Xaa is preferably Leu, but may be other amino acids including Pro although not Arg or Lys, and Yaa may be Pro. Amino acid amides and methyl esters are also readily hydrolyzed, but rates on arylamides are exceedingly low.. It catalyses the reaction Release of an N-terminal amino acid, preferentially leucine, but not glutamic or aspartic acids.. Functionally, presumably involved in the processing and regular turnover of intracellular proteins. Catalyzes the removal of unsubstituted N-terminal amino acids from various peptides. The polypeptide is Probable cytosol aminopeptidase 1 (pepA1) (Shewanella oneidensis (strain ATCC 700550 / JCM 31522 / CIP 106686 / LMG 19005 / NCIMB 14063 / MR-1)).